Consider the following 503-residue polypeptide: Cardiolipin synthase (503 aa).

The next 3 helical transmembrane spans lie at 5 to 25 (LNVLLFLLILSTGLYLTRSFW), 29 to 49 (IVGAFSVLITITVVFIGIVIF), and 59 to 79 (LTWLMVLAVFPVVGFIFYLMF). PLD phosphodiesterase domains follow at residues 238–265 (INYRNHRKIIVIDGTVGFVGGLNIGDEY) and 416–443 (TRGFLHSKIIIVDNEIASIGTSNMDMRS). Residues H243, K245, D250, H421, K423, and D428 contribute to the active site.

The protein belongs to the phospholipase D family. Cardiolipin synthase subfamily.

Its subcellular location is the cell membrane. It catalyses the reaction 2 a 1,2-diacyl-sn-glycero-3-phospho-(1'-sn-glycerol) = a cardiolipin + glycerol. Functionally, catalyzes the reversible phosphatidyl group transfer from one phosphatidylglycerol molecule to another to form cardiolipin (CL) (diphosphatidylglycerol) and glycerol. The polypeptide is Cardiolipin synthase (cls) (Halalkalibacterium halodurans (strain ATCC BAA-125 / DSM 18197 / FERM 7344 / JCM 9153 / C-125) (Bacillus halodurans)).